The sequence spans 1544 residues: Lysine-specific demethylase 5B (1544 aa).

One can recognise a JmjN domain in the interval 32–73 (CPVFEPSWEEFADPFAFIHKIRPIAEQTGICKVRPPPDWQPP). Residues 97–187 (TRVKLNFLDQ…ILNPYNLFLS (91 aa)) form the ARID domain. Residues K148, K204, K209, K242, K274, and K278 each participate in a glycyl lysine isopeptide (Lys-Gly) (interchain with G-Cter in SUMO2) cross-link. The tract at residues 201–230 (TDTKDKEYKPHDIPQRQSVQPSETCPPARR) is disordered. Over residues 202–214 (DTKDKEYKPHDIP) the composition is skewed to basic and acidic residues. The PHD-type 1 zinc finger occupies 309-359 (LYVCLLCGSGNDEDRLLLCDGCDDSYHTFCLIPPLHDVPKGDWRCPKCLAQ). Position 425 (Y425) interacts with 2-oxoglutarate. A JmjC domain is found at 453 to 619 (EYLDSGWNLN…LGRQCVEHYR (167 aa)). Positions 499 and 501 each coordinate Fe cation. 2-oxoglutarate-binding residues include S507, N509, and K517. H587 is a Fe cation binding site. A C5HC2 zinc finger spans residues 692-744 (CVKCKTTCFMSAISCSCKPGLLVCLHHVKELCSCPPYKYKLRYRYTLDDLYPM). K769 participates in a covalent cross-link: Glycyl lysine isopeptide (Lys-Gly) (interchain with G-Cter in SUMO2). The residue at position 832 (K832) is an N6-acetyllysine. S986 is modified (phosphoserine). The PHD-type 2 zinc-finger motif lies at 1176 to 1224 (IKICLCQKAPAAPMIQCELCRDAFHTSCVAVPSISQGLRIWLCPHCRRS). The residue at position 1328 (S1328) is a Phosphoserine. Residues 1374-1400 (PSPAQQTDRSSPVRPSSEKNDCCRGKR) are disordered. Residues 1376 to 1387 (PAQQTDRSSPVR) show a composition bias toward polar residues. Over residues 1389 to 1400 (SSEKNDCCRGKR) the composition is skewed to basic and acidic residues. K1450 is covalently cross-linked (Glycyl lysine isopeptide (Lys-Gly) (interchain with G-Cter in SUMO2)). S1456 is subject to Phosphoserine. The PHD-type 3 zinc finger occupies 1484-1538 (DAICPAVSCLQPEGDEVDWVQCDGSCNQWFHQVCVGVSPEMAEKEDYICVRCTVK).

It belongs to the JARID1 histone demethylase family. Interacts with FOXG1B, PAX9, MYC, MYCN and RB1. Interacts with HDAC1, HDAC4, HDAC5 and HDAC7. Interacts (via PHD-type 1 zinc finger) with histone H3 unmodified at 'Lys-4'; the interaction is inhibited when histone H3 is methylated at 'Arg-2' or 'Lys-4'. It depends on Fe(2+) as a cofactor. Ubiquitously expressed, with highest levels in testis. Down-regulated in melanoma and glioblastoma. Up-regulated in breast cancer (at protein level).

It is found in the nucleus. The catalysed reaction is N(6),N(6),N(6)-trimethyl-L-lysyl(4)-[histone H3] + 3 2-oxoglutarate + 3 O2 = L-lysyl(4)-[histone H3] + 3 formaldehyde + 3 succinate + 3 CO2. Several specific inhibitors are being developed and tested. The inhibitor KDOAM-25 inhibits its demethylase activity, resulting to cell cycle arrest in myeloma cells. In terms of biological role, histone demethylase that demethylates 'Lys-4' of histone H3, thereby playing a central role in histone code. Does not demethylate histone H3 'Lys-9' or H3 'Lys-27'. Demethylates trimethylated, dimethylated and monomethylated H3 'Lys-4'. Acts as a transcriptional corepressor for FOXG1B and PAX9. Favors the proliferation of breast cancer cells by repressing tumor suppressor genes such as BRCA1 and HOXA5. In contrast, may act as a tumor suppressor for melanoma. Represses the CLOCK-BMAL1 heterodimer-mediated transcriptional activation of the core clock component PER2. This is Lysine-specific demethylase 5B (KDM5B) from Homo sapiens (Human).